We begin with the raw amino-acid sequence, 845 residues long: Beta-glucosidase (845 aa).

A glycan (N-linked (GlcNAc...) asparagine) is linked at Asn66. Residue Asp225 is part of the active site. N-linked (GlcNAc...) asparagine glycans are attached at residues Asn304, Asn438, and Asn621. In terms of domain architecture, PA14 spans 408-568; the sequence is AENAGLIAKF…DDDEEIRNAA (161 aa).

The protein belongs to the glycosyl hydrolase 3 family. As to quaternary structure, homotetramer.

It catalyses the reaction Hydrolysis of terminal, non-reducing beta-D-glucosyl residues with release of beta-D-glucose.. Its pathway is glycan metabolism; cellulose degradation. The polypeptide is Beta-glucosidase (Kluyveromyces marxianus (Yeast)).